A 348-amino-acid polypeptide reads, in one-letter code: Nicotinate-nucleotide--dimethylbenzimidazole phosphoribosyltransferase (348 aa).

Glu-316 acts as the Proton acceptor in catalysis.

Belongs to the CobT family.

The enzyme catalyses 5,6-dimethylbenzimidazole + nicotinate beta-D-ribonucleotide = alpha-ribazole 5'-phosphate + nicotinate + H(+). It participates in nucleoside biosynthesis; alpha-ribazole biosynthesis; alpha-ribazole from 5,6-dimethylbenzimidazole: step 1/2. In terms of biological role, catalyzes the synthesis of alpha-ribazole-5'-phosphate from nicotinate mononucleotide (NAMN) and 5,6-dimethylbenzimidazole (DMB). This Xanthomonas axonopodis pv. citri (strain 306) protein is Nicotinate-nucleotide--dimethylbenzimidazole phosphoribosyltransferase.